We begin with the raw amino-acid sequence, 317 residues long: Transaldolase (317 aa).

Lysine 126 functions as the Schiff-base intermediate with substrate in the catalytic mechanism.

It belongs to the transaldolase family. Type 1 subfamily. Homodimer.

It is found in the cytoplasm. The enzyme catalyses D-sedoheptulose 7-phosphate + D-glyceraldehyde 3-phosphate = D-erythrose 4-phosphate + beta-D-fructose 6-phosphate. Its pathway is carbohydrate degradation; pentose phosphate pathway; D-glyceraldehyde 3-phosphate and beta-D-fructose 6-phosphate from D-ribose 5-phosphate and D-xylulose 5-phosphate (non-oxidative stage): step 2/3. Its function is as follows. Transaldolase is important for the balance of metabolites in the pentose-phosphate pathway. This chain is Transaldolase, found in Burkholderia thailandensis (strain ATCC 700388 / DSM 13276 / CCUG 48851 / CIP 106301 / E264).